The primary structure comprises 619 residues: Very-long-chain aldehyde decarbonylase GL1-4 (619 aa).

The next 5 helical transmembrane spans lie at 45–65, 94–114, 126–146, 178–198, and 325–345; these read IAFS…QIWI, GWDD…LAMP, GAVV…YWFH, FAEH…TIYL, and AWYM…AWIY. Residues 138-272 form the Fatty acid hydroxylase domain; sequence VEFLYYWFHR…MPFYDYIYNT (135 aa).

This sequence belongs to the sterol desaturase family. In terms of assembly, homodimer.

The protein resides in the endoplasmic reticulum membrane. The enzyme catalyses a long-chain fatty aldehyde + 2 NADPH + O2 + H(+) = a long-chain alkane + formate + 2 NADP(+) + H2O. Aldehyde decarbonylase involved in the conversion of aldehydes to alkanes. Core component of a very-long-chain alkane synthesis complex. This chain is Very-long-chain aldehyde decarbonylase GL1-4, found in Oryza sativa subsp. indica (Rice).